Consider the following 446-residue polypeptide: N-succinylarginine dihydrolase 2 (446 aa).

Substrate contacts are provided by residues 20-29 (VGLSPGNLAS), asparagine 111, and 138-139 (HR). Residue glutamate 175 is part of the active site. Arginine 212 provides a ligand contact to substrate. The active site involves histidine 246. Substrate-binding residues include aspartate 248 and asparagine 361. Cysteine 367 acts as the Nucleophile in catalysis.

This sequence belongs to the succinylarginine dihydrolase family. As to quaternary structure, homodimer.

The catalysed reaction is N(2)-succinyl-L-arginine + 2 H2O + 2 H(+) = N(2)-succinyl-L-ornithine + 2 NH4(+) + CO2. Its pathway is amino-acid degradation; L-arginine degradation via AST pathway; L-glutamate and succinate from L-arginine: step 2/5. In terms of biological role, catalyzes the hydrolysis of N(2)-succinylarginine into N(2)-succinylornithine, ammonia and CO(2). The polypeptide is N-succinylarginine dihydrolase 2 (Caulobacter vibrioides (strain ATCC 19089 / CIP 103742 / CB 15) (Caulobacter crescentus)).